The sequence spans 460 residues: Argininosuccinate lyase (460 aa).

This sequence belongs to the lyase 1 family. Argininosuccinate lyase subfamily.

Its subcellular location is the cytoplasm. The catalysed reaction is 2-(N(omega)-L-arginino)succinate = fumarate + L-arginine. The protein operates within amino-acid biosynthesis; L-arginine biosynthesis; L-arginine from L-ornithine and carbamoyl phosphate: step 3/3. This is Argininosuccinate lyase from Sulfurimonas denitrificans (strain ATCC 33889 / DSM 1251) (Thiomicrospira denitrificans (strain ATCC 33889 / DSM 1251)).